The chain runs to 138 residues: Large ribosomal subunit protein uL16 (138 aa).

Belongs to the universal ribosomal protein uL16 family. Part of the 50S ribosomal subunit.

In terms of biological role, binds 23S rRNA and is also seen to make contacts with the A and possibly P site tRNAs. This chain is Large ribosomal subunit protein uL16, found in Chlamydia trachomatis serovar D (strain ATCC VR-885 / DSM 19411 / UW-3/Cx).